A 432-amino-acid chain; its full sequence is Trigger factor (432 aa).

Residues 161-246 form the PPIase FKBP-type domain; sequence GTRATINFVG…VVKVEARELP (86 aa).

The protein belongs to the FKBP-type PPIase family. Tig subfamily.

The protein resides in the cytoplasm. It carries out the reaction [protein]-peptidylproline (omega=180) = [protein]-peptidylproline (omega=0). Its function is as follows. Involved in protein export. Acts as a chaperone by maintaining the newly synthesized protein in an open conformation. Functions as a peptidyl-prolyl cis-trans isomerase. The sequence is that of Trigger factor from Aliivibrio salmonicida (strain LFI1238) (Vibrio salmonicida (strain LFI1238)).